A 237-amino-acid chain; its full sequence is NADH-ubiquinone oxidoreductase assembly factor N7BML (237 aa).

A compositionally biased stretch (basic and acidic residues) spans 214-223 (VEKERDDSGK). Positions 214–237 (VEKERDDSGKPAEWTPKAAVRRRG) are disordered.

Belongs to the complex I NDUFA12 subunit family.

The protein resides in the mitochondrion. In terms of biological role, acts as an assembly factor of mitochondrial complex I. This Yarrowia lipolytica (strain CLIB 122 / E 150) (Yeast) protein is NADH-ubiquinone oxidoreductase assembly factor N7BML.